Reading from the N-terminus, the 393-residue chain is Translation initiation factor eIF2B subunit beta (393 aa).

A disordered region spans residues 105-125 (VSSSNSSSPSQKRDIPSNEKL). Phosphoserine is present on residues Ser-106, Ser-108, and Ser-112.

Belongs to the eIF-2B alpha/beta/delta subunits family. In terms of assembly, component of the translation initiation factor 2B (eIF2B) complex which is a heterodecamer of two sets of five different subunits: alpha, beta, gamma, delta and epsilon. Subunits alpha, beta and delta comprise a regulatory subcomplex and subunits epsilon and gamma comprise a catalytic subcomplex. Within the complex, the hexameric regulatory complex resides at the center, with the two heterodimeric catalytic subcomplexes bound on opposite sides.

The protein localises to the cytoplasm. It localises to the cytosol. In terms of biological role, acts as a component of the translation initiation factor 2B (eIF2B) complex, which catalyzes the exchange of GDP for GTP on the eukaryotic initiation factor 2 (eIF2) complex gamma subunit. Its guanine nucleotide exchange factor activity is repressed when bound to eIF2 complex phosphorylated on the alpha subunit, thereby limiting the amount of methionyl-initiator methionine tRNA available to the ribosome and consequently global translation is repressed. The polypeptide is Translation initiation factor eIF2B subunit beta (tif222) (Schizosaccharomyces pombe (strain 972 / ATCC 24843) (Fission yeast)).